The sequence spans 641 residues: Epithelial sodium channel subunit beta (641 aa).

Topologically, residues 1–50 (MHVKKYLLKGLHRLQKGPGYTYKELLVWYCDNTNTHGPKRIICEGPKKKA) are cytoplasmic. The helical transmembrane segment at 51 to 71 (MWFVLTLLFTSLVCWQWGLFI) threads the bilayer. At 72–533 (KTYLNWEVSV…GGQFGFWMGG (462 aa)) the chain is on the extracellular side. Cystine bridges form between C98–C273, C185–C190, C197–C204, C250–C257, C362–C449, C387–C445, C391–C441, C400–C427, and C402–C416. N141 carries an N-linked (GlcNAc...) asparagine glycan. N379 is a glycosylation site (N-linked (GlcNAc...) asparagine). The chain crosses the membrane as a helical span at residues 534–554 (SVLCLIEFGEIIIDFVWITII). Residues 555 to 641 (KLVALAKSVR…IESDSEGDAI (87 aa)) are Cytoplasmic-facing. The tract at residues 597–624 (TPGPDVEAYPHEQNPPIPGTPPPNYDSL) is disordered. The span at 609-620 (QNPPIPGTPPPN) shows a compositional bias: pro residues. The PY motif; recruits WW domain-containing proteins and is thereby required for ubiquitination and inhibition of the channel by NEDD4 and NEDD4L signature appears at 617-621 (PPPNY). Residues S634 and S636 each carry the phosphoserine modification.

This sequence belongs to the amiloride-sensitive sodium channel (TC 1.A.6) family. SCNN1B subfamily. As to quaternary structure, component of the heterotrimeric epithelial sodium channel (ENaC) composed of an alpha/SCNN1A, a beta/SCNN1B and a gamma/SCNN1G subunit. An additional delta/SCNN1D subunit can replace the alpha/SCNN1A subunit to form an alternative channel with specific properties. Interacts with WWP1 (via WW domains). Interacts with WWP2 (via WW domains); inhibits the channel. Interacts with the full-length immature form of PCSK9 (pro-PCSK9). Interacts (N-glycosylated) with BPIFA1; the interaction is direct and inhibits the proteolytic processing of SCNN1A and SCNN1G and the activation of ENaC. In terms of processing, ubiquitinated. Can be ubiquitinated at multiple sites and undergo monoubiquitination and polyubiquitination. Ubiquitination by NEDD4 or NEDD4L inhibits the ENaC channel through endocytosis, intracellular retention and degradation of its individual subunits. However, some studies could not confirm the ubiquitination of this subunit of the ENaC. Phosphorylated on serine and threonine residues. Aldosterone and insulin increase the basal level of phosphorylation. Post-translationally, N-glycosylated. N-glycosylation is required for interaction with BPIFA1.

It localises to the apical cell membrane. The protein resides in the cytoplasmic vesicle membrane. It carries out the reaction Na(+)(in) = Na(+)(out). With respect to regulation, originally identified and characterized by its inhibition by the diuretic drug amiloride. Its function is as follows. This is one of the three pore-forming subunits of the heterotrimeric epithelial sodium channel (ENaC), a critical regulator of sodium balance and fluid homeostasis. ENaC operates in epithelial tissues, where it mediates the electrodiffusion of sodium ions from extracellular fluid through the apical membrane of cells, with water following osmotically. It plays a key role in maintaining sodium homeostasis through electrogenic sodium reabsorption in the kidneys. Additionally, ENaC is essential for airway surface liquid homeostasis, which is crucial for proper mucus clearance. The chain is Epithelial sodium channel subunit beta from Bos taurus (Bovine).